A 326-amino-acid polypeptide reads, in one-letter code: MWRSRWDASVLKAEALALLPCGLGMAFSQSHVMAARRHQHSRLIIEVDEYSSNPTQAFTFYNINQGRFQPPHVQMVDPVPHDAPKPPGYTRFVCVSDTHSRTDPIQMPYGDVLIHAGDFTELGLPSEVKKFNEWLGSLPYEYKIVIAGNHELTFDQEFMADLIKQDFYYFPSVSKLKPENYENVQSLLTNCIYLQDSEVTVRGFRIYGSPWQPWFYGWGFNLPRGQALLEKWNLIPEGVDILITHGPPLGFLDWVPKKMQRVGCVELLNTVQRRVQPRLHVFGHIHEGYGVMADGTTTYVNASVCTVNYQPVNPPIVIDLPTPRNS.

This sequence belongs to the UPF0046 family. Expressed predominantly in adult brain.

May have metallophosphoesterase activity (in vitro). The polypeptide is Metallophosphoesterase domain-containing protein 1 (MPPED1) (Homo sapiens (Human)).